We begin with the raw amino-acid sequence, 354 residues long: Abasic site processing protein HMCES (354 aa).

Cys2 functions as the Nucleophile in the catalytic mechanism. A Thiazolidine linkage to a ring-opened DNA abasic site modification is found at Cys2. Glu127 is a catalytic residue. Residues Lys148 and Lys151 each participate in a glycyl lysine isopeptide (Lys-Gly) (interchain with G-Cter in SUMO2) cross-link. Phosphoserine is present on Ser160. Lys276 is covalently cross-linked (Glycyl lysine isopeptide (Lys-Gly) (interchain with G-Cter in SUMO2)). The segment at 292–354 (ATKSPKKEDS…EPVAKRPYSQ (63 aa)) is disordered. Ser295 carries the post-translational modification Phosphoserine. Residues 296–309 (PKKEDSKTPQKEES) are compositionally biased toward basic and acidic residues. Residue Lys306 forms a Glycyl lysine isopeptide (Lys-Gly) (interchain with G-Cter in SUMO2) linkage. Ser322 carries the post-translational modification Phosphoserine. A PIP-box motif is present at residues 332–338 (GLLEQWL). The span at 337 to 348 (WLKREKEEEPVA) shows a compositional bias: basic and acidic residues. Residues Lys339 and Lys342 each participate in a glycyl lysine isopeptide (Lys-Gly) (interchain with G-Cter in SUMO2) cross-link.

It belongs to the SOS response-associated peptidase family. In terms of assembly, interacts (via PIP-box motif) with PCNA. In terms of processing, ubiquitinated; the covalent HMCES DNA-protein cross-link is ubiquitinated, leading to its degradation by the proteasome.

The protein resides in the chromosome. With respect to regulation, formation and reversal of DNA-protein cross-link depends on DNA context. Catalyzes formation of the thiazolidine linkage in presence of abasic sites in single-stranded DNA. Mediates the reversal of the thiazolidine cross-link in presence of double stranded DNA. In terms of biological role, sensor of abasic sites in single-stranded DNA (ssDNA) required to preserve genome integrity by promoting error-free repair of abasic sites. Acts as an enzyme that recognizes and binds abasic sites in ssDNA at replication forks and chemically modifies the lesion by forming a covalent cross-link with DNA: forms a stable thiazolidine linkage between a ring-opened abasic site and the alpha-amino and sulfhydryl substituents of its N-terminal catalytic cysteine residue. Promotes error-free repair by protecting abasic sites from translesion synthesis (TLS) polymerases and endonucleases that are error-prone and would generate mutations and double-strand breaks. The HMCES DNA-protein cross-link is then either reversed or degraded. HMCES is able to catalyze the reversal of its thiazolidine cross-link and cycle between a cross-link and a non-cross-linked state depending on DNA context: mediates self-reversal of the thiazolidine cross-link in double stranded DNA, allowing APEX1 to initiate downstream repair of abasic sites. The HMCES DNA-protein cross-link can also be degraded by the SPRTN metalloprotease following unfolding by the BRIP1/FANCJ helicase. Has preference for ssDNA, but can also accommodate double-stranded DNA with 3' or 5' overhang (dsDNA), and dsDNA-ssDNA 3' junction. Plays a protective role during somatic hypermutation of immunoglobulin genes in B-cells: acts via its ability to form covalent cross-links with abasic sites, thereby limiting the accumulation of deletions in somatic hypermutation target regions. Also involved in class switch recombination (CSR) in B-cells independently of the formation of a DNA-protein cross-link: acts by binding and protecting ssDNA overhangs to promote DNA double-strand break repair through the microhomology-mediated alternative-end-joining (Alt-EJ) pathway. Acts as a protease: mediates autocatalytic processing of its N-terminal methionine in order to expose the catalytic cysteine. This Pongo abelii (Sumatran orangutan) protein is Abasic site processing protein HMCES.